The sequence spans 334 residues: Protein-methionine-sulfoxide reductase catalytic subunit MsrP (334 aa).

A signal peptide (tat-type signal) is located at residues 1–44 (MKKNQFLKESDVTAESVFFMKRRQVLKALGISATALSLPHAAHA). Mo-molybdopterin-binding positions include N88, 91–92 (YE), C146, T181, N233, R238, and 249–251 (GIK).

Belongs to the MsrP family. In terms of assembly, heterodimer of a catalytic subunit (MsrP) and a heme-binding subunit (MsrQ). Mo-molybdopterin is required as a cofactor. In terms of processing, predicted to be exported by the Tat system. The position of the signal peptide cleavage has not been experimentally proven.

It localises to the periplasm. The catalysed reaction is L-methionyl-[protein] + a quinone + H2O = L-methionyl-(S)-S-oxide-[protein] + a quinol. It carries out the reaction L-methionyl-[protein] + a quinone + H2O = L-methionyl-(R)-S-oxide-[protein] + a quinol. In terms of biological role, part of the MsrPQ system that repairs oxidized periplasmic proteins containing methionine sulfoxide residues (Met-O), using respiratory chain electrons. Thus protects these proteins from oxidative-stress damage caused by reactive species of oxygen and chlorine generated by the host defense mechanisms. MsrPQ is essential for the maintenance of envelope integrity under bleach stress, rescuing a wide series of structurally unrelated periplasmic proteins from methionine oxidation, including the primary periplasmic chaperone SurA and the lipoprotein Pal. The catalytic subunit MsrP is non-stereospecific, being able to reduce both (R-) and (S-) diastereoisomers of methionine sulfoxide. In Escherichia coli (strain K12 / MC4100 / BW2952), this protein is Protein-methionine-sulfoxide reductase catalytic subunit MsrP.